Here is a 1503-residue protein sequence, read N- to C-terminus: MNESASQEELRPAQENRKEDKERKWNLTEVKELHETLQSVPDVPVKEDTNSVVEKAMDEIKSQELNLEGQRKISPGSIKDSKTEASGNIAIRKSAKVIFALDETELKSKPEHTWKKNLFERMEARAQAMQQKIIDKENLKKELEKKAEKKLPRDNLAKEWFNTDSMTLNNTAYLLDKLLPTLVPGVENMLTQVEKKKVLTEADTPSKFDPINYLGEYLIRNNPNYIKDPGMSGYQRLMKEVTEDLKIYVPDTICNRVSKMKENVKQNRKQRESIDKIIVKVANTRKQALQEQFDEWILDPKGMIPKSVIQNVLQEFFQNPDFKLGSHCKQLDITDSTEPRLNKMEFTEYISSHIKDLKSEMFEELLKHLCHSADEFREVIKADMRRQMFAELFLHCDHGKVGFLDRQRTLALLELFYDHSSQMLRSLLRNPRQWPFIEFEEINLTELWGDMDNQKHIYEGFDKVLLEMNTLLSANHASKTQSKLLESPDQPKLNEQRTSTPSPNPPEQQRGVTAEQGPQRISIEEQQQGKKPTAEQELYIESVIEPGTHTESTLEQGSSRRLLTEQETHRESTTEQGQHKGSIEGQGPRRVSVSEQGSSRESVAEQGSRRESIAEQDRHKGSVAEQGSRRMSAAEQGSLRESVIEEPYQKSEQGPYGEIISEEQEDIGSTSQSRKDSILKSTKYGEPITSEYIEVPLQEKRSWEQTYEEEIFLSSELQEEVPTLSRKDHFPETTKKEVQKDKPCEPKSQKIEGKSWSGEFFTCNWKMKYVTFEDEEQANLIYGNSRFTDLHSIIRNIQSCKEVKGRTAFNGVSFNLLQFVQLLETFVGEDAPLSVSETLTSFFKEGYVETEQEKMNALEQFSQNAFQVRQRLLLEAIFQKWDSDGSGFLDLKEVDELLYTYKEGMEKESMKKAKLHIQFPKPHPGHEVRLSSKQFQNYIELVVSELRGNEDQVLESVVEFLMNALERSHIESLRNSARRKWLHQIQCAAETSGVSLEPVYSETFKALMQDAEAHGNKKISAHISLLEENLLLPEKGNVLLRNVACTLDDAQFVLNRVLYRDMKGISFTVVDEGKPIHVPQVQYHGNIFFWNQSRNKHDYNGSFLALPLQDAYMRIFGVLAVDTLRDPHEINIFLPHEIRFYQGVANVFSTAYHYVHSREHILHIVITGIGWLYDVTSSITSITTYFVEPSPAQDSDYVLRNMMVTGQLGLTEIHKNPPTIHRKSCIFRDFLFKCTDSSEVVLASACGETHIVVPLRERTGEALGVLDFNIGQNRMLLCQEYKDLQKMMKVVQVACYEILGEFSGEIKKKYILEIENVREVQRAGILFFRIMLLELQESIQLLNSMEFVSLLLYDHTLVTEPNSPQDSKSMELEANVKLVRDILKAVILFFHPELEFSSDFGSWDKCKFYVNKYLVNNICAFDPTAKHVEVNVQLIDEYIRDHSRTEVWKFGNVVIEHLYHWIHICSALMKITKQLNSGITPPLPSKTDNYMYAKMPGEGLQEK.

The interval 1 to 23 is disordered; sequence MNESASQEELRPAQENRKEDKER. Over residues 8 to 23 the composition is skewed to basic and acidic residues; sequence EELRPAQENRKEDKER. A Phosphoserine modification is found at Ser77. Disordered stretches follow at residues 477 to 518, 544 to 656, and 730 to 750; these read ASKT…EQGP, IEPG…QGPY, and FPET…KSQK. Polar residues predominate over residues 549–561; that stretch reads HTESTLEQGSSRR. Composition is skewed to basic and acidic residues over residues 562-582 and 607-622; these read LLTE…HKGS and GSRR…HKGS. The region spanning 869–904 is the EF-hand domain; that stretch reads RQRLLLEAIFQKWDSDGSGFLDLKEVDELLYTYKEG. The Ca(2+) site is built by Asp882, Asp884, Ser886, and Glu893.

This chain is EF-hand calcium-binding domain-containing protein 5 (EFCAB5), found in Homo sapiens (Human).